A 1249-amino-acid chain; its full sequence is Protein transport protein Sec31A (1249 aa).

WD repeat units follow at residues 4–47 (KEID…EIFE), 64–111 (SSSH…AGDK), 120–160 (KHTG…TPMT), 166–206 (QPPE…PIIK), 209–254 (DHSN…SPLR), 258–298 (NHAR…VLYE), and 301–342 (TNTQ…DGLR). The segment at 161-470 (PGAKTQPPED…IDASQTDFEK (310 aa)) is interaction with SEC13. The WD 8; interaction with SEC13 repeat unit spans residues 397–429 (SFSFGGKLVTFENVTGQPQQGAEQPRRQPVFIS). The residue at position 423 (arginine 423) is an Asymmetric dimethylarginine. Serine 526 and serine 531 each carry phosphoserine. A Glycyl lysine isopeptide (Lys-Gly) (interchain with G-Cter in ubiquitin) cross-link involves residue lysine 647. Disordered stretches follow at residues 790–829 (QGRS…VQSQ), 842–940 (TTWS…RYPN), and 954–1123 (PHMY…PIGN). Over residues 796–805 (GQESSRSSYE) the composition is skewed to polar residues. The residue at position 799 (serine 799) is a Phosphoserine. Residues 800-1142 (SRSSYEGQPL…TEKITKKPIP (343 aa)) form an interaction with PDCD6 region. Positions 873–879 (GFIMHGN) match the ALG-2-binding site motif-2 (ABS-2) motif. A compositionally biased stretch (pro residues) spans 898–908 (QPPPYPQPQPY). Low complexity-rich tracts occupy residues 961 to 970 (PASSPTSSSA) and 991 to 1007 (PSSS…GTPP). Positions 1013–1024 (PASQRTGPQNGW) are enriched in polar residues. Residues 1056–1074 (PGGDPQPQGLQQQPSASGP) are compositionally biased toward low complexity. Residue threonine 1190 is modified to Phosphothreonine. Residue serine 1192 is modified to Phosphoserine. A Glycyl lysine isopeptide (Lys-Gly) (interchain with G-Cter in ubiquitin) cross-link involves residue lysine 1246.

Belongs to the WD repeat SEC31 family. COPII is composed of at least 5 proteins: the SEC23/24 complex, the SEC13/31 complex and SAR1. SEC13 and SEC31 make a 2:2 tetramer that forms the edge element of the COPII outer coat. The tetramer self-assembles in multiple copies to form the complete polyhedral cage. Interacts (via WD 8) with SEC13. Interacts with PDCD6; interaction takes place in response to cytosolic calcium increase and leads to bridge together the BCR(KLHL12) complex and SEC31A, leading to monoubiquitination. Interacts with KLHL12. Monoubiquitinated by the BCR(KLHL12) E3 ubiquitin ligase complex, leading to regulate the size of COPII coats. Ubiquitously expressed.

It localises to the cytoplasm. The protein localises to the cytoplasmic vesicle. The protein resides in the COPII-coated vesicle membrane. It is found in the endoplasmic reticulum membrane. Its function is as follows. Component of the coat protein complex II (COPII) which promotes the formation of transport vesicles from the endoplasmic reticulum (ER). The coat has two main functions, the physical deformation of the endoplasmic reticulum membrane into vesicles and the selection of cargo molecules. The polypeptide is Protein transport protein Sec31A (Sec31a) (Rattus norvegicus (Rat)).